Here is a 156-residue protein sequence, read N- to C-terminus: Small ribosomal subunit protein uS7 (156 aa).

The protein belongs to the universal ribosomal protein uS7 family. Part of the 30S ribosomal subunit. Contacts proteins S9 and S11.

One of the primary rRNA binding proteins, it binds directly to 16S rRNA where it nucleates assembly of the head domain of the 30S subunit. Is located at the subunit interface close to the decoding center, probably blocks exit of the E-site tRNA. This chain is Small ribosomal subunit protein uS7, found in Mycoplasmopsis pulmonis (strain UAB CTIP) (Mycoplasma pulmonis).